The chain runs to 236 residues: uncharacterized protein (236 aa).

This sequence belongs to the HyuE racemase family.

It is found in the cytoplasm. This is an uncharacterized protein from Schizosaccharomyces pombe (strain 972 / ATCC 24843) (Fission yeast).